The sequence spans 358 residues: Isopentenyl-diphosphate delta-isomerase (358 aa).

12–13 (RK) contacts substrate. FMN-binding positions include 69-71 (AMT), Ser99, and Asn128. Residue Gln158 participates in substrate binding. Glu159 contacts Mg(2+). FMN contacts are provided by residues Lys190, Thr220, 267-269 (GIR), and 288-289 (AG).

This sequence belongs to the IPP isomerase type 2 family. As to quaternary structure, homooctamer. Dimer of tetramers. FMN serves as cofactor. Requires NADPH as cofactor. Mg(2+) is required as a cofactor.

It localises to the cytoplasm. The enzyme catalyses isopentenyl diphosphate = dimethylallyl diphosphate. In terms of biological role, involved in the biosynthesis of isoprenoids. Catalyzes the 1,3-allylic rearrangement of the homoallylic substrate isopentenyl (IPP) to its allylic isomer, dimethylallyl diphosphate (DMAPP). The sequence is that of Isopentenyl-diphosphate delta-isomerase from Listeria monocytogenes serotype 4a (strain HCC23).